A 776-amino-acid chain; its full sequence is Chitin synthase 1 (776 aa).

Helical transmembrane passes span 451 to 471 (LVSL…FYFL), 487 to 507 (FWIF…LFIV), 523 to 543 (LIIL…VFVI), 558 to 578 (VLVS…LMSI), 695 to 714 (VVLF…VQVY), and 723 to 743 (IYLA…AIGS).

It belongs to the chitin synthase family.

It is found in the cell membrane. The catalysed reaction is [(1-&gt;4)-N-acetyl-beta-D-glucosaminyl](n) + UDP-N-acetyl-alpha-D-glucosamine = [(1-&gt;4)-N-acetyl-beta-D-glucosaminyl](n+1) + UDP + H(+). With respect to regulation, requires proteolytic activation. Functionally, polymerizes chitin, a structural polymer of the cell wall and septum, by transferring the sugar moiety of UDP-GlcNAc to the non-reducing end of the growing chitin polymer. Also involved in forming cross walls in the hyphal phase. In Candida albicans (Yeast), this protein is Chitin synthase 1 (CHS1).